The following is a 197-amino-acid chain: dTTP/UTP pyrophosphatase (197 aa).

Aspartate 70 functions as the Proton acceptor in the catalytic mechanism.

This sequence belongs to the Maf family. YhdE subfamily. The cofactor is a divalent metal cation.

Its subcellular location is the cytoplasm. The catalysed reaction is dTTP + H2O = dTMP + diphosphate + H(+). The enzyme catalyses UTP + H2O = UMP + diphosphate + H(+). In terms of biological role, nucleoside triphosphate pyrophosphatase that hydrolyzes dTTP and UTP. May have a dual role in cell division arrest and in preventing the incorporation of modified nucleotides into cellular nucleic acids. The sequence is that of dTTP/UTP pyrophosphatase (yceF) from Shigella dysenteriae serotype 1 (strain Sd197).